The sequence spans 142 residues: Transcriptional regulator MraZ (142 aa).

2 consecutive SpoVT-AbrB domains span residues 5 to 51 (ASSL…PRPE) and 77 to 120 (AMDV…DKAS).

It belongs to the MraZ family. Forms oligomers.

It localises to the cytoplasm. The protein resides in the nucleoid. This Verminephrobacter eiseniae (strain EF01-2) protein is Transcriptional regulator MraZ.